The primary structure comprises 459 residues: Transmembrane protein 143 (459 aa).

2 consecutive transmembrane segments (helical) span residues 280–300 (LLNL…GMVV) and 301–321 (LTDL…FMGL). Serine 332 is modified (phosphoserine). The tract at residues 435 to 459 (GFPKLDPVAPITSEPPQATPSSNIS) is disordered. Residues 448–459 (EPPQATPSSNIS) are compositionally biased toward polar residues.

The protein localises to the membrane. In Homo sapiens (Human), this protein is Transmembrane protein 143 (TMEM143).